Reading from the N-terminus, the 144-residue chain is Large ribosomal subunit protein uL13 (144 aa).

It belongs to the universal ribosomal protein uL13 family. In terms of assembly, part of the 50S ribosomal subunit.

Functionally, this protein is one of the early assembly proteins of the 50S ribosomal subunit, although it is not seen to bind rRNA by itself. It is important during the early stages of 50S assembly. The protein is Large ribosomal subunit protein uL13 of Mesomycoplasma hyopneumoniae (strain 232) (Mycoplasma hyopneumoniae).